The following is a 218-amino-acid chain: 25.3 kDa vesicle transport protein SEC22-1 (218 aa).

At 1–192 (MVKMTLIARV…DKAKDLNRQA (192 aa)) the chain is on the cytoplasmic side. Positions 6-120 (LIARVTDGLP…YAFIKFDTFI (115 aa)) constitute a Longin domain. The v-SNARE coiled-coil homology domain occupies 135-195 (NIAKLNDELY…KDLNRQALIR (61 aa)). A helical; Anchor for type IV membrane protein transmembrane segment spans residues 193 to 213 (LIRKWAPVAIVFGVVFLLFWV). Topologically, residues 214 to 218 (KNKLW) are vesicular.

This sequence belongs to the synaptobrevin family. As to quaternary structure, interacts with SEC24A. In terms of tissue distribution, mainly expressed in flowers and siliques, to a lower extent in seedlings, and barely in roots and leaves.

It is found in the golgi apparatus membrane. Its subcellular location is the endoplasmic reticulum membrane. V-SNARE involved in vesicle trafficking from the ER to the Golgi complex and required for early secretion. Involved in endoplasmic reticulum (ER) biogenesis and functions as well as for Golgi-stack integrity. Essential for gametophytes development. Involved in cesium Cs(+) accumulation, a non-essential cation. The sequence is that of 25.3 kDa vesicle transport protein SEC22-1 from Arabidopsis thaliana (Mouse-ear cress).